The following is a 781-amino-acid chain: uncharacterized protein (781 aa).

Disordered stretches follow at residues 1–27 (MKKD…ELDD) and 56–268 (NLHI…SDVH). The span at 11–27 (ESLEEYDEENYTSELDD) shows a compositional bias: acidic residues. A compositionally biased stretch (basic and acidic residues) spans 57–73 (LHIDEKSKGNIHDDTNK). A compositionally biased stretch (basic residues) spans 80–94 (KRKGKLNNKKLKLKK). The segment covering 99 to 116 (SDEEEENDKNDKNDDDQY) has biased composition (acidic residues). Composition is skewed to basic and acidic residues over residues 123–144 (DEDR…KGDN), 170–188 (EKNH…HVSV), 216–227 (KTSKKNKNDKTN), and 251–268 (DDYH…SDVH). The stretch at 616-655 (NDTYTLSKLNNQINELTKKINILRGNLDKARKNHAAMKSN) forms a coiled coil.

This is an uncharacterized protein from Plasmodium falciparum (isolate 3D7).